The sequence spans 205 residues: Imidazole glycerol phosphate synthase subunit HisH (205 aa).

The 205-residue stretch at 1–205 (MITIVDYQMG…RFATAPVEVA (205 aa)) folds into the Glutamine amidotransferase type-1 domain. Cys79 functions as the Nucleophile in the catalytic mechanism. Catalysis depends on residues His182 and Glu184.

Heterodimer of HisH and HisF.

Its subcellular location is the cytoplasm. The enzyme catalyses 5-[(5-phospho-1-deoxy-D-ribulos-1-ylimino)methylamino]-1-(5-phospho-beta-D-ribosyl)imidazole-4-carboxamide + L-glutamine = D-erythro-1-(imidazol-4-yl)glycerol 3-phosphate + 5-amino-1-(5-phospho-beta-D-ribosyl)imidazole-4-carboxamide + L-glutamate + H(+). It catalyses the reaction L-glutamine + H2O = L-glutamate + NH4(+). The protein operates within amino-acid biosynthesis; L-histidine biosynthesis; L-histidine from 5-phospho-alpha-D-ribose 1-diphosphate: step 5/9. IGPS catalyzes the conversion of PRFAR and glutamine to IGP, AICAR and glutamate. The HisH subunit catalyzes the hydrolysis of glutamine to glutamate and ammonia as part of the synthesis of IGP and AICAR. The resulting ammonia molecule is channeled to the active site of HisF. The polypeptide is Imidazole glycerol phosphate synthase subunit HisH (Rhodopirellula baltica (strain DSM 10527 / NCIMB 13988 / SH1)).